The primary structure comprises 456 residues: Protein ESC2 (456 aa).

Residues 1 to 24 (MTGDSRSISEPSINLDPDNTSFSD) show a composition bias toward polar residues. The disordered stretch occupies residues 1–154 (MTGDSRSISE…SSIRSISPAG (154 aa)). Over residues 25–43 (ENSDDFFMDNSYDIDEIDH) the composition is skewed to acidic residues. The span at 83-93 (QSLSRSSSKNV) shows a compositional bias: polar residues. Phosphoserine occurs at positions 90, 125, and 126. Residues 169-287 (ENDDFFKELA…QDFENEVSDI (119 aa)) form an SUMO-like region 1 repeat. A coiled-coil region spans residues 301-360 (EATLESKLKEEEAALLIKERQEMERKLEKKRNEQEESEYREFESELKNVEETQEIKENDT). Residues 380 to 456 (MEEVMRIALM…DEDMVDVIID (77 aa)) form an SUMO-like region 2 repeat.

In terms of assembly, component of a cullin-RING ligase (CRL)-like complex composed of at least the cullin RTT101, a linker protein MMS1, and the potential substrate receptor ESC2. Interacts with RTT101 and MMS1. Interacts with SIR2.

Its subcellular location is the cytoplasm. The protein localises to the nucleus. In terms of biological role, may be a substrate targeting component of a cullin-RING-based E3 ubiquitin-protein ligase complex RTT101(MMS1-ESC2). Involved in HMR and telomere silencing via the recruitment or stabilizing of the SIR (silent information regulators) complex. The polypeptide is Protein ESC2 (ESC2) (Saccharomyces cerevisiae (strain ATCC 204508 / S288c) (Baker's yeast)).